We begin with the raw amino-acid sequence, 327 residues long: MIRTSFKHSIETRNQLLHRRHFVVAAALTVGNFVFGRDARLADAMDNGELHNKNEDYKAKAEELKEQRLRSIANSRPMKPCYEGHVPLYPHERVLLFITSGLKSYFHPEDGENIVQLGEASAFTPFLERLKNTMLSDKTGRRILREQPDITSESLDMDRLKKMAPNTLGHSYYKWLIKEGVSPDTRAPVKYIDDPTHAYIFKRYRQCHDFYHAVNDLPIIIEGEIAVKALEAANIGVPMAALGALLAPLRLKPVQKKRLYDVYLPWAVRTGLSCEPLINVYWEELLEHDVEELRKKLRITPPPDLRAIRRERAQQRKQFKLKYERHE.

Zn(2+)-binding residues include histidine 208, aspartate 209, histidine 212, and glutamate 224.

Belongs to the COQ4 family. In terms of assembly, component of a multi-subunit COQ enzyme complex, composed of at least COQ3, COQ4, COQ5, COQ6, COQ7 and COQ9. Requires Zn(2+) as cofactor.

Its subcellular location is the mitochondrion inner membrane. It catalyses the reaction a 4-hydroxy-3-methoxy-5-(all-trans-polyprenyl)benzoate + H(+) = a 2-methoxy-6-(all-trans-polyprenyl)phenol + CO2. The protein operates within cofactor biosynthesis; ubiquinone biosynthesis. Lyase that catalyzes the C1-decarboxylation of 4-hydroxy-3-methoxy-5-(all-trans-polyprenyl)benzoic acid into 2-methoxy-6-(all-trans-polyprenyl)phenol during ubiquinone biosynthesis. The polypeptide is Ubiquinone biosynthesis protein COQ4, mitochondrial (Lachancea thermotolerans (strain ATCC 56472 / CBS 6340 / NRRL Y-8284) (Yeast)).